The chain runs to 273 residues: Nitrogenase iron protein (273 aa).

Position 8-15 (8-15) interacts with ATP; it reads GKGGIGKS. C95 serves as a coordination point for [4Fe-4S] cluster. Residue R98 is modified to ADP-ribosylarginine; by dinitrogenase reductase ADP-ribosyltransferase. C130 serves as a coordination point for [4Fe-4S] cluster.

It belongs to the NifH/BchL/ChlL family. Homodimer. Requires [4Fe-4S] cluster as cofactor. Post-translationally, the reversible ADP-ribosylation of Arg-98 inactivates the nitrogenase reductase and regulates nitrogenase activity.

It catalyses the reaction N2 + 8 reduced [2Fe-2S]-[ferredoxin] + 16 ATP + 16 H2O = H2 + 8 oxidized [2Fe-2S]-[ferredoxin] + 2 NH4(+) + 16 ADP + 16 phosphate + 6 H(+). In terms of biological role, the key enzymatic reactions in nitrogen fixation are catalyzed by the nitrogenase complex, which has 2 components: the iron protein and the molybdenum-iron protein. The chain is Nitrogenase iron protein from Roseiflexus sp. (strain RS-1).